The following is a 206-amino-acid chain: Ribonuclease HII (206 aa).

In terms of domain architecture, RNase H type-2 spans 14 to 206 (ALVCGIDEAG…FRLRQLGEKP (193 aa)). A divalent metal cation is bound by residues Asp-20, Glu-21, and Asp-117.

Belongs to the RNase HII family. Mn(2+) serves as cofactor. Mg(2+) is required as a cofactor.

It localises to the cytoplasm. The catalysed reaction is Endonucleolytic cleavage to 5'-phosphomonoester.. Endonuclease that specifically degrades the RNA of RNA-DNA hybrids. This is Ribonuclease HII from Pelodictyon phaeoclathratiforme (strain DSM 5477 / BU-1).